The primary structure comprises 143 residues: MSLTEKDKAAVRALWGKISKSADAIGADALSRMLFVYPQTKTYFTHWPDLSPGSVHVKKHGKNVMGGIALAVSKIDDLTNGLMELSEQHAYQLRVDPANFKILSHCILVVVSIMYPKDFTPEAHVSLDKFLSGVSLALAERYR.

Position 2 is an N-acetylserine (S2). The region spanning S2–R143 is the Globin domain. O2 is bound at residue H60. H89 is a heme b binding site.

The protein belongs to the globin family. As to quaternary structure, hb 1 is a heterotetramer of two alpha-1 and two beta chains. Red blood cells.

Its function is as follows. Involved in oxygen transport from gills to the various peripheral tissues. This Cottoperca gobio (Frogmouth) protein is Hemoglobin subunit alpha-1 (hba1).